Consider the following 389-residue polypeptide: Diaminopimelate decarboxylase (389 aa).

At lysine 58 the chain carries N6-(pyridoxal phosphate)lysine. Pyridoxal 5'-phosphate is bound by residues glycine 233 and glutamate 271–arginine 274. Substrate-binding residues include arginine 274, arginine 310, tyrosine 314, glutamate 342, and tyrosine 370. Tyrosine 370 provides a ligand contact to pyridoxal 5'-phosphate.

This sequence belongs to the Orn/Lys/Arg decarboxylase class-II family. LysA subfamily. As to quaternary structure, homodimer. Requires pyridoxal 5'-phosphate as cofactor.

The catalysed reaction is meso-2,6-diaminopimelate + H(+) = L-lysine + CO2. The protein operates within amino-acid biosynthesis; L-lysine biosynthesis via DAP pathway; L-lysine from DL-2,6-diaminopimelate: step 1/1. Functionally, specifically catalyzes the decarboxylation of meso-diaminopimelate (meso-DAP) to L-lysine. This Francisella tularensis subsp. holarctica (strain LVS) protein is Diaminopimelate decarboxylase.